An 82-amino-acid polypeptide reads, in one-letter code: Colonization factor (82 aa).

The N-terminal stretch at 1 to 33 (MFSSLKNKLNTFKSTLSLGVFLLFSAFANQALA) is a signal peptide.

It localises to the secreted. The polypeptide is Colonization factor (cep) (Vibrio cholerae serotype O1 (strain ATCC 39315 / El Tor Inaba N16961)).